The sequence spans 107 residues: uncharacterized protein (107 aa).

This is an uncharacterized protein from Methanocaldococcus jannaschii (strain ATCC 43067 / DSM 2661 / JAL-1 / JCM 10045 / NBRC 100440) (Methanococcus jannaschii).